We begin with the raw amino-acid sequence, 326 residues long: Cytosolic sulfotransferase 7 (326 aa).

72-77 (KSGTTW) serves as a coordination point for 3'-phosphoadenylyl sulfate. The active-site Proton acceptor is the His138. Residues Arg160, Ser168, Tyr226, and 292–294 (RKG) each bind 3'-phosphoadenylyl sulfate.

It belongs to the sulfotransferase 1 family.

It localises to the cytoplasm. Functionally, sulfotransferase that utilizes 3'-phospho-5'-adenylyl sulfate (PAPS) as sulfonate donor. In Arabidopsis thaliana (Mouse-ear cress), this protein is Cytosolic sulfotransferase 7 (SOT7).